A 445-amino-acid chain; its full sequence is UPF0210 protein SMU_73 (445 aa).

Belongs to the UPF0210 family. In terms of assembly, homodimer.

In Streptococcus mutans serotype c (strain ATCC 700610 / UA159), this protein is UPF0210 protein SMU_73.